The following is a 427-amino-acid chain: Endothelin-1 receptor (427 aa).

The first 20 residues, Met1–Ser20, serve as a signal peptide directing secretion. At Asp21–Lys80 the chain is on the extracellular side. N-linked (GlcNAc...) asparagine glycans are attached at residues Asn29 and Asn62. The helical transmembrane segment at Tyr81–Leu102 threads the bilayer. Residues Arg103–Arg112 are Cytoplasmic-facing. The chain crosses the membrane as a helical span at residues Asn113–Ile132. At Asp133–Lys159 the chain is on the extracellular side. A disulfide bridge links Cys158 with Cys239. A helical membrane pass occupies residues Leu160 to Val181. Residues Asp182–Glu205 lie on the Cytoplasmic side of the membrane. Residues Ile206–Phe229 form a helical membrane-spanning segment. Topologically, residues Glu230–Asp256 are extracellular. Residues Trp257 to Met278 traverse the membrane as a helical segment. Residues Thr279–Lys306 are Cytoplasmic-facing. Residues Thr307–Leu328 form a helical membrane-spanning segment. The Extracellular segment spans residues Lys329–Leu347. Residues Leu348–Val372 traverse the membrane as a helical segment. Over Ser373–Asn427 the chain is Cytoplasmic. The tract at residues Gln406–Asn427 is disordered. Positions Lys408–Asn427 are enriched in basic and acidic residues. Ser425 carries the phosphoserine modification.

The protein belongs to the G-protein coupled receptor 1 family. Endothelin receptor subfamily. EDNRA sub-subfamily. As to quaternary structure, interacts with HDAC7 and KAT5. In terms of tissue distribution, isoform 1, isoform 3 and isoform 4 are expressed in a variety of tissues, with highest levels in the aorta and cerebellum, followed by lung, atrium and cerebral cortex, lower levels in the placenta, kidney, adrenal gland, duodenum, colon, ventricle and liver but no expression in umbilical vein endothelial cells. Within the placenta, isoform 1, isoform 2, isoform 3 and isoform 4 are expressed in the villi and stem villi vessels.

It localises to the cell membrane. In terms of biological role, receptor for endothelin-1. Mediates its action by association with G proteins that activate a phosphatidylinositol-calcium second messenger system. The rank order of binding affinities for ET-A is: ET1 &gt; ET2 &gt;&gt; ET3. The chain is Endothelin-1 receptor from Homo sapiens (Human).